The chain runs to 124 residues: Small ribosomal subunit protein uS12 (124 aa).

Asp89 bears the 3-methylthioaspartic acid mark.

Belongs to the universal ribosomal protein uS12 family. Part of the 30S ribosomal subunit. Contacts proteins S8 and S17. May interact with IF1 in the 30S initiation complex.

Its function is as follows. With S4 and S5 plays an important role in translational accuracy. In terms of biological role, interacts with and stabilizes bases of the 16S rRNA that are involved in tRNA selection in the A site and with the mRNA backbone. Located at the interface of the 30S and 50S subunits, it traverses the body of the 30S subunit contacting proteins on the other side and probably holding the rRNA structure together. The combined cluster of proteins S8, S12 and S17 appears to hold together the shoulder and platform of the 30S subunit. In Buchnera aphidicola subsp. Acyrthosiphon pisum (strain 5A), this protein is Small ribosomal subunit protein uS12.